Reading from the N-terminus, the 960-residue chain is MPERHQSIDAQLRLLAPGKVSEDDKLVEYDALLVDRFLDILQDLHGPHLREFVQECYELSAEYENDRDEARLGELGSKLTSLPPGDSIVVASSFSHMLNLANLAEEVQVAQRRRIKLKRGDFADEASAPTESDIEETLKRLVSQLGKSREEVFDALKNQTVDLVFTAHPTQSVRRSLLQKHGRIRNCLRQLYAKDITADDKQELDEALQREIQAAFRTDEIRRTPPTPQDEMRAGMSYFHETIWKGVPKFLRRIDTALKNIGINERLPYNAPLIQFSSWMGGDRDGNPRVTPEVTRDVCLLARMMAANLYFSQIEDLMFELSMWRCSDELRIRADELHRSSKRAAKHYIEFWKQVPPNEPYRVILGDVRDKLYYTRERSRHLLSSGISEIPEEATFTNVEQFLEPLELCYRSLCACGDKPIADGSLLDFLRQVFNFGLALVKLDIRQESDRHTDVLDSITTHLGIGSYAEWSEEKRQDWLLSELRGKRPLFGSDLPQTEETADVLGTFHVLAELPADCFGAYIISMATAPSDVLAVELLQRECHVKQPLRVVPLFEKLADLEAAPAAVARLFSIDWYMNRINGKQEVMIGYSDSGKDAGRLSAAWQMYKAQEELIKVAKHYGVKLTMFHGRGGTVGRGGGPTHLAILSQPPDTIHGSLRVTVQGEVIEHSFGEELLCFRTLQRYTAATLEHGMHPPISPKPEWRALMDEMAVVATKEYRSIVFQEPRFVEYFRSATPETEYGRMNIGSRPSKRKPSGGIESLRAIPWIFAWTQTRFHLPVWLGFGAAIKHIMQKDIRNIHVLKEMYNEWPFFRVTLDLLEMVFAKGDPGIAAVYDKLLVAEDLQSFGEQLRKNYEETKELLLQVAGHKDVLEGDPYLKQRLRLRESYITTLNVCQAYTLKRIRDPSFQVSPQPPLSKEFTDESQPVELVQLNQQSEYAPGLEDTLILTMKGIAAGMQNTG.

A Phosphoserine modification is found at Ser-7. Residues His-168 and Lys-596 contribute to the active site.

It belongs to the PEPCase type 1 family. Homotetramer. Mg(2+) serves as cofactor.

It localises to the cytoplasm. The catalysed reaction is oxaloacetate + phosphate = phosphoenolpyruvate + hydrogencarbonate. It functions in the pathway photosynthesis; C3 acid pathway. With respect to regulation, by light-reversible phosphorylation. Through the carboxylation of phosphoenolpyruvate (PEP) it forms oxaloacetate, a four-carbon dicarboxylic acid source for the tricarboxylic acid cycle. The polypeptide is Phosphoenolpyruvate carboxylase 1 (PEPC) (Sorghum bicolor (Sorghum)).